The following is a 201-amino-acid chain: Snake venom metalloproteinase trimerelysin-2 (201 aa).

Residue Gln-1 is modified to Pyrrolidone carboxylic acid. The Peptidase M12B domain occupies 6 to 201 (RYIELAIVVD…YNPQCILNAP (196 aa)). The N-linked (GlcNAc...) asparagine glycan is linked to Asn-72. Cystine bridges form between Cys-117–Cys-196, Cys-158–Cys-180, and Cys-160–Cys-163. Residue His-142 participates in Zn(2+) binding. Residue Glu-143 is part of the active site. Residues His-146 and His-152 each contribute to the Zn(2+) site.

This sequence belongs to the venom metalloproteinase (M12B) family. P-I subfamily. Monomer. Zn(2+) is required as a cofactor. As to expression, expressed by the venom gland.

It localises to the secreted. It carries out the reaction Cleavage of 3-Asn-|-Gln-4, 10-His-|-Leu-11 and 14-Ala-|-Leu-15 in the insulin B chain, and the bond Z-Gly-Pro-|-Leu-Gly-Pro in a small molecule substrate of microbial collagenase.. Major venom non-hemorrhagic metalloproteinase. In Protobothrops flavoviridis (Habu), this protein is Snake venom metalloproteinase trimerelysin-2.